Here is a 196-residue protein sequence, read N- to C-terminus: Holliday junction branch migration complex subunit RuvA (196 aa).

The tract at residues 1–63 (MYDYIKGTLV…DDAHLLFGFH (63 aa)) is domain I. The segment at 64–142 (TEDEKEVFLK…ELPAETTNTT (79 aa)) is domain II. The segment at 143-146 (ANQT) is flexible linker. Residues 147 to 196 (AGNQQLDEAMEALLALGYKSTELKKVKAFFEDTNETAEQYIKSALKMLMK) are domain III.

It belongs to the RuvA family. Homotetramer. Forms an RuvA(8)-RuvB(12)-Holliday junction (HJ) complex. HJ DNA is sandwiched between 2 RuvA tetramers; dsDNA enters through RuvA and exits via RuvB. An RuvB hexamer assembles on each DNA strand where it exits the tetramer. Each RuvB hexamer is contacted by two RuvA subunits (via domain III) on 2 adjacent RuvB subunits; this complex drives branch migration. In the full resolvosome a probable DNA-RuvA(4)-RuvB(12)-RuvC(2) complex forms which resolves the HJ.

The protein resides in the cytoplasm. The RuvA-RuvB-RuvC complex processes Holliday junction (HJ) DNA during genetic recombination and DNA repair, while the RuvA-RuvB complex plays an important role in the rescue of blocked DNA replication forks via replication fork reversal (RFR). RuvA specifically binds to HJ cruciform DNA, conferring on it an open structure. The RuvB hexamer acts as an ATP-dependent pump, pulling dsDNA into and through the RuvAB complex. HJ branch migration allows RuvC to scan DNA until it finds its consensus sequence, where it cleaves and resolves the cruciform DNA. The polypeptide is Holliday junction branch migration complex subunit RuvA (Streptococcus thermophilus (strain CNRZ 1066)).